The sequence spans 245 residues: Uridylate kinase (245 aa).

20–23 is an ATP binding site; that stretch reads KLSG. Gly-60 is a binding site for UMP. 2 residues coordinate ATP: Gly-61 and Arg-65. Residues Asp-80 and 141 to 148 contribute to the UMP site; that span reads AGLPYFST. Positions 175 and 178 each coordinate ATP.

It belongs to the UMP kinase family. In terms of assembly, homohexamer.

The protein resides in the cytoplasm. The catalysed reaction is UMP + ATP = UDP + ADP. The protein operates within pyrimidine metabolism; CTP biosynthesis via de novo pathway; UDP from UMP (UMPK route): step 1/1. With respect to regulation, inhibited by UTP. In terms of biological role, catalyzes the reversible phosphorylation of UMP to UDP. This chain is Uridylate kinase, found in Arthrobacter sp. (strain FB24).